Here is a 220-residue protein sequence, read N- to C-terminus: Glutathione peroxidase (220 aa).

The active site involves Sec64. A non-standard amino acid (selenocysteine) is located at residue Sec64.

The protein belongs to the glutathione peroxidase family. Post-translationally, during periods of oxidative stress, Sec-64 may react with a superoxide radical, irreversibly lose hydroselenide and be converted to dehydroalanine.

It carries out the reaction 2 glutathione + H2O2 = glutathione disulfide + 2 H2O. In terms of biological role, may protect the virus and component of infected cells from oxidative damage by peroxides whose formation may be stimulated by infection. This chain is Glutathione peroxidase (GPX1), found in Homo sapiens (Human).